The sequence spans 179 residues: Cytochrome c-type biogenesis protein CcmE (179 aa).

The Cytoplasmic portion of the chain corresponds to 1-8 (MNPRRKSR). A helical; Signal-anchor for type II membrane protein membrane pass occupies residues 9–29 (LTIILFVLLGVTIASSLVLYA). Topologically, residues 30-179 (LRQNIDLFYT…AVNSVEEGKK (150 aa)) are periplasmic. The heme site is built by histidine 131 and tyrosine 135. Basic and acidic residues-rich tracts occupy residues 138 to 148 (PDLSEKMEQVH) and 161 to 179 (ESDR…EGKK). Positions 138–179 (PDLSEKMEQVHKPMGISNQDMQGESDRDRLDKAVNSVEEGKK) are disordered.

Belongs to the CcmE/CycJ family.

Its subcellular location is the cell inner membrane. In terms of biological role, heme chaperone required for the biogenesis of c-type cytochromes. Transiently binds heme delivered by CcmC and transfers the heme to apo-cytochromes in a process facilitated by CcmF and CcmH. This is Cytochrome c-type biogenesis protein CcmE from Mannheimia succiniciproducens (strain KCTC 0769BP / MBEL55E).